The chain runs to 264 residues: Tritrans,polycis-undecaprenyl-diphosphate synthase (geranylgeranyl-diphosphate specific) (264 aa).

The active site involves Asp-43. Asp-43 provides a ligand contact to Mg(2+). Substrate-binding positions include 44–47, Trp-48, His-60, and 88–90; these read GNRR and STE. Asn-91 serves as the catalytic Proton acceptor. Substrate-binding positions include Phe-92, Arg-94, Arg-213, and 219–221; that span reads RIS. Glu-232 is a Mg(2+) binding site.

It belongs to the UPP synthase family. Homodimer. It depends on Mg(2+) as a cofactor.

The enzyme catalyses geranylgeranyl diphosphate + 7 isopentenyl diphosphate = tri-trans,hepta-cis-undecaprenyl diphosphate + 7 diphosphate. Its function is as follows. Catalyzes the sequential condensation of isopentenyl diphosphate (IPP) with geranylgeranyl diphosphate (GGPP) to yield (2Z,6Z,10Z,14Z,18Z,22Z,26Z,30E,34E,38E)-undecaprenyl diphosphate (tritrans,heptacis-UPP). It is probably the precursor of glycosyl carrier lipids. The chain is Tritrans,polycis-undecaprenyl-diphosphate synthase (geranylgeranyl-diphosphate specific) from Thermococcus kodakarensis (strain ATCC BAA-918 / JCM 12380 / KOD1) (Pyrococcus kodakaraensis (strain KOD1)).